The following is a 176-amino-acid chain: Caltractin (176 aa).

Residues 1–27 form a disordered region; sequence MNRAAIAAGKPSGSISTGKPRRKTRAE. EF-hand domains follow at residues 31 to 66, 67 to 102, 104 to 139, and 140 to 175; these read EMKHEIREAFDLFDADRSGRIDFHELKVAMRALGFD, VKKEEIQRIMNEYDRDQLGEITFQDFEEVMIEKISN, DPTEEILKAFRLFDDDATGRISLKNLRRVAKELSEN, and ISDEELLAMIQEFDRDGDGEIDEEDFIAILRSTSAF. Residues aspartate 44, aspartate 46, serine 48, arginine 50, and glutamate 55 each coordinate Ca(2+). Aspartate 153, aspartate 155, aspartate 157, glutamate 159, and aspartate 164 together coordinate Ca(2+).

The protein belongs to the centrin family. As to quaternary structure, monomer.

The protein localises to the cytoplasm. Its subcellular location is the cytoskeleton. It is found in the microtubule organizing center. The protein resides in the centrosome. Plays a fundamental role in microtubule-organizing center structure and function. This Giardia intestinalis (Giardia lamblia) protein is Caltractin (CAL).